Consider the following 311-residue polypeptide: Glutaminase (311 aa).

The substrate site is built by Ser66, Asn116, Glu162, Asn169, Tyr193, Tyr245, and Val263.

This sequence belongs to the glutaminase family. As to quaternary structure, homotetramer.

The catalysed reaction is L-glutamine + H2O = L-glutamate + NH4(+). This Rhodopseudomonas palustris (strain HaA2) protein is Glutaminase.